The following is a 374-amino-acid chain: Translocating chain-associated membrane protein 1 (374 aa).

The Cytoplasmic portion of the chain corresponds to Met1–Met32. A helical transmembrane segment spans residues Leu33–Leu53. Over Gln54–Ala81 the chain is Lumenal. Asn56 is a glycosylation site (N-linked (GlcNAc...) asparagine). The helical transmembrane segment at Thr82–Leu102 threads the bilayer. Residues Asp103–Glu121 lie on the Cytoplasmic side of the membrane. A TLC domain is found at Ser117–His326. A helical membrane pass occupies residues Ser122–Ser142. At Glu143 to Asn159 the chain is on the lumenal side. The helical transmembrane segment at Leu160–Phe180 threads the bilayer. At Pro181–Asp192 the chain is on the cytoplasmic side. Residues Ile193–Leu213 form a helical membrane-spanning segment. A topological domain (lumenal) is located at residue Asn214. Residues Leu215–Ile235 form a helical membrane-spanning segment. The Cytoplasmic segment spans residues Ser236–Ser251. The chain crosses the membrane as a helical span at residues Leu252–Val272. Over Gly273–Arg297 the chain is Lumenal. A helical transmembrane segment spans residues Ile298–Phe318. Over Gln319–Ser374 the chain is Cytoplasmic. Residues Pro333–Ser374 form a disordered region. The segment covering Val334–Arg347 has biased composition (basic residues). Positions Asn352–Ala363 are enriched in polar residues. Residue Ser365 is modified to Phosphoserine.

Belongs to the TRAM family. Interacts with SEC61B. May interact with Derlin-1/DERL1. N-glycosylated.

It is found in the endoplasmic reticulum membrane. Involved in the translocation of nascent protein chains into or through the endoplasmic reticulum (ER) membrane by facilitating the proper chain positioning at the SEC61 channel. Regulates the exposure of nascent secretory protein chain to the cytosol during translocation into the ER. May affect the phospholipid bilayer in the vicinity of the lateral gate of the SEC61 channel, thereby facilitating ER protein transport. Intimately associates with transmembrane (TM) domain of nascent membrane proteins during the entire integration process into the ER membrane. Associates with the second TM domain of G-protein-coupled receptor opsin/OPSD nascent chain in the ER membrane, which may facilitate its integration into the membrane. Under conditions of ER stress, participates in the disposal of misfolded ER membrane proteins during the unfolded protein response (UPR), an integrated stress response (ISR) pathway, by selectively retrotranslocating misfolded ER-membrane proteins from the ER into the cytosol where they are ubiquitinated and degraded by the proteasome. The polypeptide is Translocating chain-associated membrane protein 1 (Rattus norvegicus (Rat)).